Here is a 1224-residue protein sequence, read N- to C-terminus: DNA-directed RNA polymerase subunit beta' (1224 aa).

Zn(2+) contacts are provided by C60, C62, C75, and C78. Residues D449, D451, and D453 each coordinate Mg(2+). Positions 819, 893, 900, and 903 each coordinate Zn(2+).

This sequence belongs to the RNA polymerase beta' chain family. The RNAP catalytic core consists of 2 alpha, 1 beta, 1 beta' and 1 omega subunit. When a sigma factor is associated with the core the holoenzyme is formed, which can initiate transcription. The cofactor is Mg(2+). Zn(2+) serves as cofactor.

The enzyme catalyses RNA(n) + a ribonucleoside 5'-triphosphate = RNA(n+1) + diphosphate. In terms of biological role, DNA-dependent RNA polymerase catalyzes the transcription of DNA into RNA using the four ribonucleoside triphosphates as substrates. The chain is DNA-directed RNA polymerase subunit beta' from Lactobacillus johnsonii (strain CNCM I-12250 / La1 / NCC 533).